The chain runs to 91 residues: MAHKKGVGSSKNGRDSNPKYLGVKKFGGEQVLAGNILVRQRGTKFKAGANVGMGRDHTLFALEHGKVVFTNKGNKGRFISIEVAQTEVAAD.

The protein belongs to the bacterial ribosomal protein bL27 family.

The chain is Large ribosomal subunit protein bL27 from Deinococcus deserti (strain DSM 17065 / CIP 109153 / LMG 22923 / VCD115).